The following is a 62-amino-acid chain: Dual specificity mitogen-activated protein kinase kinase 3 (62 aa).

The 62-residue stretch at 1-62 (GKIAVSIVKA…VAKTMDAGCK (62 aa)) folds into the Protein kinase domain.

Belongs to the protein kinase superfamily. STE Ser/Thr protein kinase family. MAP kinase kinase subfamily. In terms of processing, activated by phosphorylation on Ser/Thr catalyzed by MAP kinase kinase kinases.

It catalyses the reaction L-seryl-[protein] + ATP = O-phospho-L-seryl-[protein] + ADP + H(+). The enzyme catalyses L-threonyl-[protein] + ATP = O-phospho-L-threonyl-[protein] + ADP + H(+). It carries out the reaction L-tyrosyl-[protein] + ATP = O-phospho-L-tyrosyl-[protein] + ADP + H(+). Catalyzes the concomitant phosphorylation of a threonine and a tyrosine residue in a Thr-Glu-Tyr sequence located in MAP kinases. The sequence is that of Dual specificity mitogen-activated protein kinase kinase 3 (map2k3) from Xenopus laevis (African clawed frog).